The following is a 1014-amino-acid chain: MICAL-like protein 2 (1014 aa).

Residues 1–107 enclose the Calponin-homology (CH) domain; it reads MAAIKALQEW…YVSQYYNYFH (107 aa). The tract at residues 1 to 261 is forms an intramolecular interaction with the C-terminal coiled coil domain keeping the protein in a closed conformation; it reads MAAIKALQEW…KLSNLASRQP (261 aa). A phosphoserine mark is found at S110, S144, and S154. Residues 114–181 form a disordered region; it reads GMAGMKRPSS…PSPKAAPGTV (68 aa). One can recognise an LIM zinc-binding domain in the interval 187 to 249; the sequence is SICGVCGKHV…THHSSEAVSV (63 aa). The residue at position 250 (S250) is a Phosphoserine. Residues 262-394 are necessary and sufficient for interaction with actinins; the sequence is GGGIADTRPI…QGQAASKGVK (133 aa). The segment at 262-810 is mediates targeting to the cell plasma membrane; sequence GGGIADTRPI…QDDQTRSCKE (549 aa). Disordered regions lie at residues 311–450 and 609–780; these read LTPP…SRVP and TLPK…RRKK. A compositionally biased stretch (polar residues) spans 332 to 355; it reads STVTTTSANSKATTHVTNSSPVGW. A compositionally biased stretch (low complexity) spans 356-368; it reads SSSAQSSTGTSGS. The segment covering 384 to 398 has biased composition (polar residues); it reads PQGQAASKGVKTQLN. Low complexity-rich tracts occupy residues 399-419 and 438-447; these read SSTD…SSRT and PASSSSSHAS. 2 stretches are compositionally biased toward polar residues: residues 624–633 and 646–656; these read LSHSTTQAFS and VGSTSWTSVSL. 2 stretches are compositionally biased toward basic and acidic residues: residues 701-711 and 720-737; these read EGWRARLKPVD and LEQK…DTPR. The span at 747 to 758 shows a compositional bias: polar residues; it reads IHITLTPIQQKR. The residue at position 759 (T759) is a Phosphothreonine. 2 positions are modified to phosphoserine: S773 and S837. The segment at 811–918 is forms an intramolecular interaction with the N-terminal Calponin-homology and LIM zinc-binding domains-containing region keeping the protein in a closed conformation; it reads KTATWGTRES…LMYKSKDQCL (108 aa). Positions 838–985 constitute a bMERB domain; the sequence is PVRLHPNYIS…EQEEDQMLES (148 aa). A coiled-coil region spans residues 845–885; the sequence is YISQEELQRQLQDIERQLDALELRGVELEKRLRAAEGDASE. The segment at 918–1014 is mediates interaction with RAB13 and is required for transition from the closed to the open conformation; sequence LEERQLDLQG…WSSKSKSGQT (97 aa).

In terms of assembly, interacts with RAB13 (GTP-bound form); competes with RAB8A and is involved in tight junctions assembly. Interacts with RAB8A; competes with RAB13 and is involved in E-cadherin endocytic recycling. Interacts with RAB8B. Interacts (preferentially in opened conformation) with ACTN1 and ACTN4; stimulated by RAB13 activation. Interacts (via calponin-homology (CH) domain) with the filamins FLNA, FLNB and FLNC (via actin-binding domain).

The protein resides in the cell membrane. The protein localises to the cell junction. It is found in the tight junction. Its subcellular location is the recycling endosome. It localises to the cell projection. The protein resides in the neuron projection. The protein localises to the cytoplasm. It is found in the cytoskeleton. Effector of small Rab GTPases which is involved in junctional complexes assembly through the regulation of cell adhesion molecules transport to the plasma membrane and actin cytoskeleton reorganization. Regulates the endocytic recycling of occludins, claudins and E-cadherin to the plasma membrane and may thereby regulate the establishment of tight junctions and adherens junctions. In parallel, may regulate actin cytoskeleton reorganization directly through interaction with F-actin or indirectly through actinins and filamins. Most probably involved in the processes of epithelial cell differentiation, cell spreading and neurite outgrowth. Undergoes liquid-liquid phase separation to form tubular recycling endosomes. Plays 2 sequential roles in the biogenesis of tubular recycling endosomes: first organizes phase separation and then the closed form formed by interaction with RAB8A promotes endosomal tubulation. This Rattus norvegicus (Rat) protein is MICAL-like protein 2 (Micall2).